The primary structure comprises 121 residues: Glycine cleavage system H protein (121 aa).

Positions Ile22 to Glu102 constitute a Lipoyl-binding domain. Lys63 is subject to N6-lipoyllysine.

This sequence belongs to the GcvH family. The glycine cleavage system is composed of four proteins: P, T, L and H. (R)-lipoate is required as a cofactor.

Functionally, the glycine cleavage system catalyzes the degradation of glycine. The H protein shuttles the methylamine group of glycine from the P protein to the T protein. In Tropheryma whipplei (strain TW08/27) (Whipple's bacillus), this protein is Glycine cleavage system H protein.